Here is a 208-residue protein sequence, read N- to C-terminus: Heat shock protein 26 (208 aa).

A phosphoserine mark is found at Ser44, Ser52, and Ser58. Residues 71–179 (ANRNDIHWPA…KSKERIIQIQ (109 aa)) form the sHSP domain. The segment at 187-208 (NVKANESEVKGKENGAPNGKDK) is disordered. The span at 191-208 (NESEVKGKENGAPNGKDK) shows a compositional bias: basic and acidic residues.

It belongs to the small heat shock protein (HSP20) family.

This is Heat shock protein 26 (Hsp26) from Drosophila melanogaster (Fruit fly).